We begin with the raw amino-acid sequence, 327 residues long: Phenylalanine--tRNA ligase alpha subunit (327 aa).

Position 252 (Glu252) interacts with Mg(2+).

This sequence belongs to the class-II aminoacyl-tRNA synthetase family. Phe-tRNA synthetase alpha subunit type 1 subfamily. As to quaternary structure, tetramer of two alpha and two beta subunits. Mg(2+) is required as a cofactor.

Its subcellular location is the cytoplasm. The catalysed reaction is tRNA(Phe) + L-phenylalanine + ATP = L-phenylalanyl-tRNA(Phe) + AMP + diphosphate + H(+). The chain is Phenylalanine--tRNA ligase alpha subunit from Photorhabdus laumondii subsp. laumondii (strain DSM 15139 / CIP 105565 / TT01) (Photorhabdus luminescens subsp. laumondii).